A 406-amino-acid polypeptide reads, in one-letter code: Cysteine desulfurase (406 aa).

Lys-226 is subject to N6-(pyridoxal phosphate)lysine. Catalysis depends on Cys-364, which acts as the Cysteine persulfide intermediate.

The protein belongs to the class-V pyridoxal-phosphate-dependent aminotransferase family. Csd subfamily. Homodimer. Interacts with SufE and the SufBCD complex composed of SufB, SufC and SufD. The interaction with SufE is required to mediate the direct transfer of the sulfur atom from the S-sulfanylcysteine. Requires pyridoxal 5'-phosphate as cofactor.

The protein resides in the cytoplasm. The catalysed reaction is (sulfur carrier)-H + L-cysteine = (sulfur carrier)-SH + L-alanine. The enzyme catalyses L-selenocysteine + AH2 = hydrogenselenide + L-alanine + A + H(+). It functions in the pathway cofactor biosynthesis; iron-sulfur cluster biosynthesis. Its function is as follows. Cysteine desulfurases mobilize the sulfur from L-cysteine to yield L-alanine, an essential step in sulfur metabolism for biosynthesis of a variety of sulfur-containing biomolecules. Component of the suf operon, which is activated and required under specific conditions such as oxidative stress and iron limitation. Acts as a potent selenocysteine lyase in vitro, that mobilizes selenium from L-selenocysteine. Selenocysteine lyase activity is however unsure in vivo. The protein is Cysteine desulfurase of Salmonella gallinarum (strain 287/91 / NCTC 13346).